Reading from the N-terminus, the 216-residue chain is Ribosomal RNA small subunit methyltransferase G (216 aa).

S-adenosyl-L-methionine contacts are provided by residues Gly83, Met88, 134–135 (VE), and Arg149.

Belongs to the methyltransferase superfamily. RNA methyltransferase RsmG family.

It is found in the cytoplasm. It catalyses the reaction guanosine(527) in 16S rRNA + S-adenosyl-L-methionine = N(7)-methylguanosine(527) in 16S rRNA + S-adenosyl-L-homocysteine. Functionally, specifically methylates the N7 position of guanine in position 527 of 16S rRNA. The polypeptide is Ribosomal RNA small subunit methyltransferase G (Pseudomonas putida (strain ATCC 700007 / DSM 6899 / JCM 31910 / BCRC 17059 / LMG 24140 / F1)).